A 651-amino-acid polypeptide reads, in one-letter code: Receptor-like serine/threonine-protein kinase At4g25390 (651 aa).

The N-terminal stretch at 1–25 (MPSRSISAPVPVLAPAPIVSSLVPA) is a signal peptide. Residues 26-40 (APSGHQNKTTRIFPP) lie on the Extracellular side of the membrane. N-linked (GlcNAc...) asparagine glycosylation occurs at Asn-32. Residues 41–61 (FVVAGAGAGFSLFITLSVCFC) form a helical membrane-spanning segment. The Cytoplasmic portion of the chain corresponds to 62–651 (KFSRKRSSPP…PLKTTRKQRR (590 aa)). The interval 66–87 (KRSSPPAENASSSPRRPSPREF) is disordered. The span at 69 to 87 (SPPAENASSSPRRPSPREF) shows a compositional bias: low complexity. Positions 99-633 (FSQANRLGQG…LKGEVNLPEL (535 aa)) constitute a Protein kinase domain. Residues 105–113 (LGQGGFGVV) and Lys-127 contribute to the ATP site. Asp-225 functions as the Proton acceptor in the catalytic mechanism.

The protein belongs to the protein kinase superfamily. Ser/Thr protein kinase family.

It is found in the cell membrane. It carries out the reaction L-seryl-[protein] + ATP = O-phospho-L-seryl-[protein] + ADP + H(+). The enzyme catalyses L-threonyl-[protein] + ATP = O-phospho-L-threonyl-[protein] + ADP + H(+). In Arabidopsis thaliana (Mouse-ear cress), this protein is Receptor-like serine/threonine-protein kinase At4g25390.